A 393-amino-acid chain; its full sequence is Phosphoglycerate kinase (393 aa).

Substrate-binding positions include 21–23, R36, 59–62, R114, and R147; these read DLN and HLGR. ATP is bound by residues K198, E320, and 346-349; that span reads GGDT.

This sequence belongs to the phosphoglycerate kinase family. In terms of assembly, monomer.

The protein resides in the cytoplasm. It carries out the reaction (2R)-3-phosphoglycerate + ATP = (2R)-3-phospho-glyceroyl phosphate + ADP. Its pathway is carbohydrate degradation; glycolysis; pyruvate from D-glyceraldehyde 3-phosphate: step 2/5. This Methylobacillus flagellatus (strain ATCC 51484 / DSM 6875 / VKM B-1610 / KT) protein is Phosphoglycerate kinase.